The following is a 268-amino-acid chain: Probable chemotaxis protein methyltransferase (268 aa).

The region spanning Met1 to Lys262 is the CheR-type methyltransferase domain. S-adenosyl-L-methionine contacts are provided by residues Asn60, Thr62, Arg66, Glu104, Asp130, Asn188 to Leu189, and Arg205 to Asn206.

It catalyses the reaction L-glutamyl-[protein] + S-adenosyl-L-methionine = [protein]-L-glutamate 5-O-methyl ester + S-adenosyl-L-homocysteine. Its function is as follows. Methylation of the membrane-bound methyl-accepting chemotaxis proteins (MCP) to form gamma-glutamyl methyl ester residues in MCP. This Rhizobium etli (strain ATCC 51251 / DSM 11541 / JCM 21823 / NBRC 15573 / CFN 42) protein is Probable chemotaxis protein methyltransferase (cheRch1).